A 716-amino-acid polypeptide reads, in one-letter code: Radial spoke head protein 4 homolog A (716 aa).

4 disordered regions span residues 1-164 (MEDS…CGRR), 375-410 (EGED…PKSF), 506-526 (GEEE…FEEN), and 697-716 (LLAA…DDYD). Residues 8–25 (KQEKENQEELGETRRPWE) are compositionally biased toward basic and acidic residues. 3 stretches are compositionally biased toward low complexity: residues 29–42 (AASP…SSEP), 54–66 (QSRS…PQSR), and 80–100 (SSPA…LAPA). Over residues 140-156 (HHTSQSEGNTFQQSQQP) the composition is skewed to polar residues. Acidic residues predominate over residues 375 to 389 (EGEDEEEVEEEDVAE). Ser-396 carries the post-translational modification Phosphoserine. Acidic residues-rich tracts occupy residues 506-516 (GEEEGEEEEEA) and 701-716 (ENEE…DDYD).

The protein belongs to the flagellar radial spoke RSP4/6 family. Interacts with RSPH6A. In terms of tissue distribution, expressed in trachea, lungs, and testes. Very strong expression is detected in nasal brushings.

The protein resides in the cytoplasm. Its subcellular location is the cytoskeleton. It is found in the cilium axoneme. It localises to the cell projection. The protein localises to the cilium. In terms of biological role, component of the axonemal radial spoke head which plays an important role in ciliary motility. Essential for triplet radial spokes (RS1, RS2 and RS3) head assembly in the motile cilia. This chain is Radial spoke head protein 4 homolog A (RSPH4A), found in Homo sapiens (Human).